Consider the following 519-residue polypeptide: 3-octaprenyl-4-hydroxybenzoate carboxy-lyase (519 aa).

Mn(2+) is bound at residue Asn177. Prenylated FMN is bound by residues 180–182 (IYR), 194–196 (RWL), and 199–200 (RG). Glu243 provides a ligand contact to Mn(2+). The active-site Proton donor is Asp318.

The protein belongs to the UbiD family. As to quaternary structure, homohexamer. It depends on prenylated FMN as a cofactor. Mn(2+) is required as a cofactor.

It is found in the cell membrane. It carries out the reaction a 4-hydroxy-3-(all-trans-polyprenyl)benzoate + H(+) = a 2-(all-trans-polyprenyl)phenol + CO2. Its pathway is cofactor biosynthesis; ubiquinone biosynthesis. Functionally, catalyzes the decarboxylation of 3-octaprenyl-4-hydroxy benzoate to 2-octaprenylphenol, an intermediate step in ubiquinone biosynthesis. The sequence is that of 3-octaprenyl-4-hydroxybenzoate carboxy-lyase from Burkholderia mallei (strain ATCC 23344).